The primary structure comprises 190 residues: CASP-like protein 2U1 (190 aa).

Topologically, residues 1–16 are cytoplasmic; sequence MAFTSLLGSDAERKVA. A helical transmembrane segment spans residues 17-37; that stretch reads VAEVALRAVLCGLGALAAALV. Residues 38–59 lie on the Extracellular side of the membrane; that stretch reads ATDTQTRTFFSLQKKATYTDMK. The chain crosses the membrane as a helical span at residues 60–80; sequence AMVLLVAAAAAAAGYSLLQAA. The Cytoplasmic portion of the chain corresponds to 81–100; the sequence is RCCCCVALLRTSIRPRARLL. The chain crosses the membrane as a helical span at residues 101–121; it reads LAWCVFACDQALAYALLAAVV. At 122 to 152 the chain is on the extracellular side; the sequence is AALQASVVAKQGLPQLQWMAICALYGAFCRQ. The helical transmembrane segment at 153–173 threads the bilayer; that stretch reads AGAGVACAVAAAVDAALLAFL. At 174–190 the chain is on the cytoplasmic side; that stretch reads SAFNLFRLYGAKATTTT.

Belongs to the Casparian strip membrane proteins (CASP) family. As to quaternary structure, homodimer and heterodimers.

Its subcellular location is the cell membrane. The polypeptide is CASP-like protein 2U1 (Zea mays (Maize)).